The following is a 261-amino-acid chain: Sepiapterin reductase (261 aa).

NADP(+) contacts are provided by residues 16–22, 44–45, and 71–72; these read GASRGFG, RT, and DL. Residues 158-159 and Y171 contribute to the substrate site; that span reads SL. K175 lines the NADP(+) pocket. G200 is a substrate binding site. 202 to 207 serves as a coordination point for NADP(+); sequence LDTDMH. Position 258 (D258) interacts with substrate.

This sequence belongs to the sepiapterin reductase family. As to quaternary structure, homodimer.

It localises to the cytoplasm. It carries out the reaction L-erythro-7,8-dihydrobiopterin + NADP(+) = L-sepiapterin + NADPH + H(+). It catalyses the reaction (6R)-L-erythro-5,6,7,8-tetrahydrobiopterin + 2 NADP(+) = 6-pyruvoyl-5,6,7,8-tetrahydropterin + 2 NADPH + 2 H(+). In terms of biological role, catalyzes the final one or two reductions in tetra-hydrobiopterin biosynthesis to form 5,6,7,8-tetrahydrobiopterin. This Xenopus tropicalis (Western clawed frog) protein is Sepiapterin reductase (spr).